An 82-amino-acid chain; its full sequence is ATP synthase subunit c (82 aa).

Helical transmembrane passes span 7–27 (FVAL…CIGI) and 53–73 (FLLA…AMMF).

It belongs to the ATPase C chain family. F-type ATPases have 2 components, F(1) - the catalytic core - and F(0) - the membrane proton channel. F(1) has five subunits: alpha(3), beta(3), gamma(1), delta(1), epsilon(1). F(0) has three main subunits: a(1), b(2) and c(10-14). The alpha and beta chains form an alternating ring which encloses part of the gamma chain. F(1) is attached to F(0) by a central stalk formed by the gamma and epsilon chains, while a peripheral stalk is formed by the delta and b chains.

It is found in the cell inner membrane. F(1)F(0) ATP synthase produces ATP from ADP in the presence of a proton or sodium gradient. F-type ATPases consist of two structural domains, F(1) containing the extramembraneous catalytic core and F(0) containing the membrane proton channel, linked together by a central stalk and a peripheral stalk. During catalysis, ATP synthesis in the catalytic domain of F(1) is coupled via a rotary mechanism of the central stalk subunits to proton translocation. Functionally, key component of the F(0) channel; it plays a direct role in translocation across the membrane. A homomeric c-ring of between 10-14 subunits forms the central stalk rotor element with the F(1) delta and epsilon subunits. The protein is ATP synthase subunit c of Aromatoleum aromaticum (strain DSM 19018 / LMG 30748 / EbN1) (Azoarcus sp. (strain EbN1)).